Reading from the N-terminus, the 224-residue chain is MTQDQLKQAVAQAAVDFILPKLDEKSVVGVGTGSTANFFIDALAQHKTAFDGAVASSEATAQRLKGHGIPVYELNSVSELEFYVDGADESDAHLNLIKGGGAALTREKIVAAVAKTFICIADGSKLVPVLGAFPLPVEVIPMARSHVARQLVKLGGDPVYREGVVTDNGNVILDVHNLQITNPVELEAQINAIVGVVTNGLFAARPADLLLLGTSEGVKSLKAE.

Residues Thr-32–Thr-35, Asp-85–Asp-88, and Lys-98–Gly-101 each bind substrate. Glu-107 (proton acceptor) is an active-site residue. A substrate-binding site is contributed by Lys-125.

The protein belongs to the ribose 5-phosphate isomerase family. In terms of assembly, homodimer.

It catalyses the reaction aldehydo-D-ribose 5-phosphate = D-ribulose 5-phosphate. Its pathway is carbohydrate degradation; pentose phosphate pathway; D-ribose 5-phosphate from D-ribulose 5-phosphate (non-oxidative stage): step 1/1. Functionally, catalyzes the reversible conversion of ribose-5-phosphate to ribulose 5-phosphate. The sequence is that of Ribose-5-phosphate isomerase A from Pseudomonas putida (strain GB-1).